The sequence spans 241 residues: Large ribosomal subunit protein uL13c (241 aa).

The transit peptide at M1–K50 directs the protein to the chloroplast.

It belongs to the universal ribosomal protein uL13 family. As to quaternary structure, part of the 50S ribosomal subunit.

Its subcellular location is the plastid. It localises to the chloroplast. The polypeptide is Large ribosomal subunit protein uL13c (RPL13) (Arabidopsis thaliana (Mouse-ear cress)).